We begin with the raw amino-acid sequence, 66 residues long: MVKPLHCLIGIVLFLAVLNAGNGFTLDRSASIERQEDSWPKISLFHGNQRKKRSEEKRFSDMEQTK.

The N-terminal stretch at 1–23 (MVKPLHCLIGIVLFLAVLNAGNG) is a signal peptide. Residues 43–66 (SLFHGNQRKKRSEEKRFSDMEQTK) are disordered. Over residues 53 to 66 (RSEEKRFSDMEQTK) the composition is skewed to basic and acidic residues.

It belongs to the scoloptoxin-24 family. Expressed by the venom gland.

The protein resides in the secreted. In Ethmostigmus rubripes (Giant centipede), this protein is U-scoloptoxin(24)-Er2a.